Here is a 267-residue protein sequence, read N- to C-terminus: Hydroxyethylthiazole kinase 2 (267 aa).

Residue Met-41 participates in substrate binding. The ATP site is built by Lys-116 and Thr-166. Gly-193 serves as a coordination point for substrate.

Belongs to the Thz kinase family. Mg(2+) is required as a cofactor.

The enzyme catalyses 5-(2-hydroxyethyl)-4-methylthiazole + ATP = 4-methyl-5-(2-phosphooxyethyl)-thiazole + ADP + H(+). It functions in the pathway cofactor biosynthesis; thiamine diphosphate biosynthesis; 4-methyl-5-(2-phosphoethyl)-thiazole from 5-(2-hydroxyethyl)-4-methylthiazole: step 1/1. Its function is as follows. Catalyzes the phosphorylation of the hydroxyl group of 4-methyl-5-beta-hydroxyethylthiazole (THZ). This chain is Hydroxyethylthiazole kinase 2, found in Streptococcus pneumoniae (strain 70585).